We begin with the raw amino-acid sequence, 279 residues long: Protein FAM151B (279 aa).

It belongs to the menorin family.

Essential for survival of retinal photoreceptor cells. The polypeptide is Protein FAM151B (Fam151b) (Mus musculus (Mouse)).